Consider the following 563-residue polypeptide: Bifunctional dihydrofolate reductase-thymidylate synthase (563 aa).

A DHFR domain is found at 3-195 (KFNIIAAINN…ILLRFQEYSV (193 aa)). Position 117–124 (117–124 (GGGVIYDL)) interacts with NADP(+). A thymidylate synthase region spans residues 275–563 (YIELVKTIME…CPSISAEMIA (289 aa)). Position 292 (arginine 292) interacts with dUMP. Cysteine 435 is an active-site residue. DUMP contacts are provided by residues histidine 436, 464 to 468 (QRSWD), asparagine 474, and 504 to 506 (HIY).

In the N-terminal section; belongs to the dihydrofolate reductase family. It in the C-terminal section; belongs to the thymidylate synthase family.

It catalyses the reaction (6S)-5,6,7,8-tetrahydrofolate + NADP(+) = 7,8-dihydrofolate + NADPH + H(+). The catalysed reaction is dUMP + (6R)-5,10-methylene-5,6,7,8-tetrahydrofolate = 7,8-dihydrofolate + dTMP. Its pathway is cofactor biosynthesis; tetrahydrofolate biosynthesis; 5,6,7,8-tetrahydrofolate from 7,8-dihydrofolate: step 1/1. In terms of biological role, bifunctional enzyme. Involved in de novo dTMP biosynthesis. Key enzyme in folate metabolism. Catalyzes an essential reaction for de novo glycine and purine synthesis, DNA precursor synthesis, and for the conversion of dUMP to dTMP. The protein is Bifunctional dihydrofolate reductase-thymidylate synthase of Acanthamoeba polyphaga mimivirus (APMV).